The primary structure comprises 245 residues: 5'-nucleotidase SurE (245 aa).

A divalent metal cation is bound by residues Asp8, Asp9, Ser39, and Asn91.

This sequence belongs to the SurE nucleotidase family. A divalent metal cation serves as cofactor.

The protein localises to the cytoplasm. It catalyses the reaction a ribonucleoside 5'-phosphate + H2O = a ribonucleoside + phosphate. Its function is as follows. Nucleotidase that shows phosphatase activity on nucleoside 5'-monophosphates. This is 5'-nucleotidase SurE from Psychromonas ingrahamii (strain DSM 17664 / CCUG 51855 / 37).